Reading from the N-terminus, the 163-residue chain is Nucleotide-binding protein SACE_6882 (163 aa).

The protein belongs to the YajQ family.

Nucleotide-binding protein. The sequence is that of Nucleotide-binding protein SACE_6882 from Saccharopolyspora erythraea (strain ATCC 11635 / DSM 40517 / JCM 4748 / NBRC 13426 / NCIMB 8594 / NRRL 2338).